A 635-amino-acid polypeptide reads, in one-letter code: Very-long-chain aldehyde decarbonylase GL1-6 (635 aa).

4 consecutive transmembrane segments (helical) span residues 46 to 66 (LLNFMVFPMLLLRLLYGQLWI), 100 to 120 (IILTALVFYLVSATMPQAQVA), 127 to 147 (GMVVTAVLHAGPVEFLYYWLH), and 183 to 203 (VVYFVLLAIPILSTVATGTVS). Positions 139–273 (VEFLYYWLHR…MPVYDYIYGT (135 aa)) constitute a Fatty acid hydroxylase domain.

It belongs to the sterol desaturase family. Homodimer.

The protein resides in the endoplasmic reticulum membrane. The catalysed reaction is a long-chain fatty aldehyde + 2 NADPH + O2 + H(+) = a long-chain alkane + formate + 2 NADP(+) + H2O. Functionally, aldehyde decarbonylase involved in the conversion of aldehydes to alkanes. Core component of a very-long-chain alkane synthesis complex. This is Very-long-chain aldehyde decarbonylase GL1-6 from Oryza sativa subsp. indica (Rice).